We begin with the raw amino-acid sequence, 437 residues long: tRNA pseudouridine synthase Pus10 (437 aa).

Residues 76 to 198 (VARDVVEHLS…GGGVDIQVNS (123 aa)) enclose the THUMP domain. D253 functions as the Nucleophile in the catalytic mechanism. Substrate contacts are provided by Y321 and Y394.

The protein belongs to the pseudouridine synthase Pus10 family.

The catalysed reaction is uridine(54) in tRNA = pseudouridine(54) in tRNA. It catalyses the reaction uridine(55) in tRNA = pseudouridine(55) in tRNA. Its function is as follows. Responsible for synthesis of pseudouridine from uracil-54 and uracil-55 in the psi GC loop of transfer RNAs. The chain is tRNA pseudouridine synthase Pus10 from Aeropyrum pernix (strain ATCC 700893 / DSM 11879 / JCM 9820 / NBRC 100138 / K1).